The sequence spans 469 residues: UDP-N-acetylmuramate--L-alanine ligase (469 aa).

Residue 114–120 (GTHGKTT) participates in ATP binding.

The protein belongs to the MurCDEF family.

It localises to the cytoplasm. The catalysed reaction is UDP-N-acetyl-alpha-D-muramate + L-alanine + ATP = UDP-N-acetyl-alpha-D-muramoyl-L-alanine + ADP + phosphate + H(+). The protein operates within cell wall biogenesis; peptidoglycan biosynthesis. In terms of biological role, cell wall formation. This Chlorobium phaeovibrioides (strain DSM 265 / 1930) (Prosthecochloris vibrioformis (strain DSM 265)) protein is UDP-N-acetylmuramate--L-alanine ligase.